The following is a 378-amino-acid chain: Probable pectin lyase C (378 aa).

The N-terminal stretch at Met1–Ala18 is a signal peptide. 2 disulfide bridges follow: Cys81-Cys100 and Cys90-Cys220. The N-linked (GlcNAc...) asparagine glycan is linked to Asn123. Arg250 is a catalytic residue. Cys316 and Cys324 form a disulfide bridge.

Belongs to the polysaccharide lyase 1 family.

The protein resides in the secreted. The catalysed reaction is Eliminative cleavage of (1-&gt;4)-alpha-D-galacturonan methyl ester to give oligosaccharides with 4-deoxy-6-O-methyl-alpha-D-galact-4-enuronosyl groups at their non-reducing ends.. In terms of biological role, pectinolytic enzymes consist of four classes of enzymes: pectin lyase, polygalacturonase, pectin methylesterase and rhamnogalacturonase. Among pectinolytic enzymes, pectin lyase is the most important in depolymerization of pectin, since it cleaves internal glycosidic bonds of highly methylated pectins. The protein is Probable pectin lyase C (pelC) of Aspergillus niger.